Consider the following 194-residue polypeptide: Imidazoleglycerol-phosphate dehydratase (194 aa).

This sequence belongs to the imidazoleglycerol-phosphate dehydratase family.

It localises to the cytoplasm. It catalyses the reaction D-erythro-1-(imidazol-4-yl)glycerol 3-phosphate = 3-(imidazol-4-yl)-2-oxopropyl phosphate + H2O. The protein operates within amino-acid biosynthesis; L-histidine biosynthesis; L-histidine from 5-phospho-alpha-D-ribose 1-diphosphate: step 6/9. This is Imidazoleglycerol-phosphate dehydratase from Bacillus cereus (strain ZK / E33L).